Consider the following 700-residue polypeptide: Non-hemolytic phospholipase C (700 aa).

The segment at residues 1 to 34 (MTNQNRRDFLRLAAGTAGAAALQLFPPVIREALA) is a signal peptide (tat-type signal).

The protein belongs to the bacterial phospholipase C family. In terms of processing, predicted to be exported by the Tat system. The position of the signal peptide cleavage has not been experimentally proven.

The catalysed reaction is a 1,2-diacyl-sn-glycero-3-phosphocholine + H2O = phosphocholine + a 1,2-diacyl-sn-glycerol + H(+). Its function is as follows. Hydrolyzes phosphatidylserine as well as phosphatidylcholine. This is Non-hemolytic phospholipase C (plcN) from Burkholderia pseudomallei (strain K96243).